A 476-amino-acid chain; its full sequence is Aspartyl/glutamyl-tRNA(Asn/Gln) amidotransferase subunit B (476 aa).

This sequence belongs to the GatB/GatE family. GatB subfamily. As to quaternary structure, heterotrimer of A, B and C subunits.

It catalyses the reaction L-glutamyl-tRNA(Gln) + L-glutamine + ATP + H2O = L-glutaminyl-tRNA(Gln) + L-glutamate + ADP + phosphate + H(+). The enzyme catalyses L-aspartyl-tRNA(Asn) + L-glutamine + ATP + H2O = L-asparaginyl-tRNA(Asn) + L-glutamate + ADP + phosphate + 2 H(+). Its function is as follows. Allows the formation of correctly charged Asn-tRNA(Asn) or Gln-tRNA(Gln) through the transamidation of misacylated Asp-tRNA(Asn) or Glu-tRNA(Gln) in organisms which lack either or both of asparaginyl-tRNA or glutaminyl-tRNA synthetases. The reaction takes place in the presence of glutamine and ATP through an activated phospho-Asp-tRNA(Asn) or phospho-Glu-tRNA(Gln). The sequence is that of Aspartyl/glutamyl-tRNA(Asn/Gln) amidotransferase subunit B from Lactobacillus acidophilus (strain ATCC 700396 / NCK56 / N2 / NCFM).